A 690-amino-acid polypeptide reads, in one-letter code: Proprotein convertase subtilisin/kexin type 9 (690 aa).

Positions 1–28 (MGTVSSRRLWWPLPLLLLLLLGPTGTRA) are cleaved as a signal peptide. A propeptide spanning residues 29–150 (QEEDDDDYEE…IEEDSSVFAQ (122 aa)) is cleaved from the precursor. Sulfotyrosine is present on Tyr-36. Ser-45 is subject to Phosphoserine. Positions 75–147 (TYVVVLKEET…VDYIEEDSSV (73 aa)) constitute an Inhibitor I9 domain. The 307-residue stretch at 153 to 459 (PWNLERITPA…GWQLFCRTVW (307 aa)) folds into the Peptidase S8 domain. Residues Asp-184 and His-224 each act as charge relay system in the active site. Intrachain disulfides connect Cys-221–Cys-253 and Cys-321–Cys-356. Ser-384 serves as the catalytic Charge relay system. The interval 448-690 (GAGWQLFCRT…HLAQASQELQ (243 aa)) is C-terminal domain. 3 disulfide bridges follow: Cys-455–Cys-525, Cys-475–Cys-524, and Cys-484–Cys-507. Asn-531 carries N-linked (GlcNAc...) asparagine glycosylation. Intrachain disulfides connect Cys-532–Cys-599, Cys-550–Cys-598, Cys-560–Cys-586, Cys-606–Cys-677, Cys-624–Cys-676, and Cys-633–Cys-652. Ser-686 carries the phosphoserine modification.

Belongs to the peptidase S8 family. As to quaternary structure, monomer. Can self-associate to form dimers and higher multimers which may have increased LDLR degrading activity. The precursor protein but not the mature protein may form multimers. Interacts with APOB, VLDLR, LRP8/APOER2 and BACE1. The full-length immature form (pro-PCSK9) interacts with SCNN1A, SCNN1B and SCNN1G. The pro-PCSK9 form (via C-terminal domain) interacts with LDLR. Interacts (via the C-terminal domain) with ANXA2 (via repeat Annexin 1); the interaction inhibits the degradation of LDLR. It depends on Ca(2+) as a cofactor. Cleavage by furin and PCSK5 generates a truncated inactive protein that is unable to induce LDLR degradation. Post-translationally, undergoes autocatalytic cleavage in the endoplasmic reticulum to release the propeptide from the N-terminus and the cleavage of the propeptide is strictly required for its maturation and activation. The cleaved propeptide however remains associated with the catalytic domain through non-covalent interactions, preventing potential substrates from accessing its active site. As a result, it is secreted from cells as a propeptide-containing, enzymatically inactive protein. In terms of processing, phosphorylation protects the propeptide against proteolysis.

Its subcellular location is the cytoplasm. The protein localises to the secreted. It is found in the endosome. It localises to the lysosome. The protein resides in the cell surface. Its subcellular location is the endoplasmic reticulum. The protein localises to the golgi apparatus. With respect to regulation, its proteolytic activity is autoinhibited by the non-covalent binding of the propeptide to the catalytic domain. Inhibited by EGTA. Its function is as follows. Crucial player in the regulation of plasma cholesterol homeostasis. Binds to low-density lipid receptor family members: low density lipoprotein receptor (LDLR), very low density lipoprotein receptor (VLDLR), apolipoprotein E receptor (LRP1/APOER) and apolipoprotein receptor 2 (LRP8/APOER2), and promotes their degradation in intracellular acidic compartments. Acts via a non-proteolytic mechanism to enhance the degradation of the hepatic LDLR through a clathrin LDLRAP1/ARH-mediated pathway. May prevent the recycling of LDLR from endosomes to the cell surface or direct it to lysosomes for degradation. Can induce ubiquitination of LDLR leading to its subsequent degradation. Inhibits intracellular degradation of APOB via the autophagosome/lysosome pathway in a LDLR-independent manner. Involved in the disposal of non-acetylated intermediates of BACE1 in the early secretory pathway. Inhibits epithelial Na(+) channel (ENaC)-mediated Na(+) absorption by reducing ENaC surface expression primarily by increasing its proteasomal degradation. Regulates neuronal apoptosis via modulation of LRP8/APOER2 levels and related anti-apoptotic signaling pathways. This Callithrix jacchus (White-tufted-ear marmoset) protein is Proprotein convertase subtilisin/kexin type 9 (PCSK9).